Here is a 396-residue protein sequence, read N- to C-terminus: Acetate kinase (396 aa).

Asn-8 is a Mg(2+) binding site. An ATP-binding site is contributed by Lys-15. Position 89 (Arg-89) interacts with substrate. Asp-146 serves as the catalytic Proton donor/acceptor. ATP contacts are provided by residues 206-210 (HLGNG), 280-282 (DMR), and 328-332 (GVGEN). Glu-382 is a binding site for Mg(2+).

This sequence belongs to the acetokinase family. In terms of assembly, homodimer. Requires Mg(2+) as cofactor. It depends on Mn(2+) as a cofactor.

The protein resides in the cytoplasm. It carries out the reaction acetate + ATP = acetyl phosphate + ADP. The protein operates within metabolic intermediate biosynthesis; acetyl-CoA biosynthesis; acetyl-CoA from acetate: step 1/2. In terms of biological role, catalyzes the formation of acetyl phosphate from acetate and ATP. Can also catalyze the reverse reaction. The chain is Acetate kinase from Clavibacter michiganensis subsp. michiganensis (strain NCPPB 382).